A 397-amino-acid chain; its full sequence is uncharacterized protein (397 aa).

The next 10 helical transmembrane spans lie at 2 to 24, 44 to 66, 92 to 114, 124 to 143, 150 to 169, 173 to 195, 255 to 277, 297 to 319, 331 to 350, and 354 to 373; these read LNLLYLILGIICGTITGLFPGIH, YIPFLIGLVITHYFINFIPSAFL, AIVLAGFGSYLGVVFSILISLFL, AFYCSIKIFIPFILIAFILY, SVWEVLVIFLSGIFGIAVLY, AFNITLTAIFTGMFGIPLLINNL, FIVSQGSIILSNEVFSLLAVIFI, INTAIFSILISSTIAIIILLNLS, FKFLSLFFIIFCSLVVIIGS, and YLIYHIIVYLTAIYIGLLAV.

The protein resides in the cell membrane. This is an uncharacterized protein from Methanocaldococcus jannaschii (strain ATCC 43067 / DSM 2661 / JAL-1 / JCM 10045 / NBRC 100440) (Methanococcus jannaschii).